The following is a 156-amino-acid chain: 6,7-dimethyl-8-ribityllumazine synthase (156 aa).

5-amino-6-(D-ribitylamino)uracil contacts are provided by residues Phe22, 57–59 (AVE), and 81–83 (SVI). 86-87 (GT) is a (2S)-2-hydroxy-3-oxobutyl phosphate binding site. The Proton donor role is filled by His89. Phe114 is a 5-amino-6-(D-ribitylamino)uracil binding site. Arg128 provides a ligand contact to (2S)-2-hydroxy-3-oxobutyl phosphate.

Belongs to the DMRL synthase family. In terms of assembly, forms an icosahedral capsid composed of 60 subunits, arranged as a dodecamer of pentamers.

It catalyses the reaction (2S)-2-hydroxy-3-oxobutyl phosphate + 5-amino-6-(D-ribitylamino)uracil = 6,7-dimethyl-8-(1-D-ribityl)lumazine + phosphate + 2 H2O + H(+). It participates in cofactor biosynthesis; riboflavin biosynthesis; riboflavin from 2-hydroxy-3-oxobutyl phosphate and 5-amino-6-(D-ribitylamino)uracil: step 1/2. Its function is as follows. Catalyzes the formation of 6,7-dimethyl-8-ribityllumazine by condensation of 5-amino-6-(D-ribitylamino)uracil with 3,4-dihydroxy-2-butanone 4-phosphate. This is the penultimate step in the biosynthesis of riboflavin. This Vibrio vulnificus (strain CMCP6) protein is 6,7-dimethyl-8-ribityllumazine synthase.